The following is an 840-amino-acid chain: Leucine--tRNA ligase (840 aa).

The short motif at 44-55 (PYPSANGLHVGH) is the 'HIGH' region element. The 'KMSKS' region signature appears at 617-621 (KMSKS). Residue Lys620 participates in ATP binding.

This sequence belongs to the class-I aminoacyl-tRNA synthetase family.

The protein localises to the cytoplasm. The enzyme catalyses tRNA(Leu) + L-leucine + ATP = L-leucyl-tRNA(Leu) + AMP + diphosphate. The chain is Leucine--tRNA ligase from Borreliella burgdorferi (strain ZS7) (Borrelia burgdorferi).